Consider the following 536-residue polypeptide: GMP synthase [glutamine-hydrolyzing] (536 aa).

A Glutamine amidotransferase type-1 domain is found at 4-206 (KILILDFGSQ…VLDICGARAD (203 aa)). Cys85 acts as the Nucleophile in catalysis. Residues His180 and Glu182 contribute to the active site. The region spanning 207–404 (WIMGDYISEA…LGLPYHMVYR (198 aa)) is the GMPS ATP-PPase domain. ATP is bound at residue 234-240 (SGGVDSS).

Homodimer.

The catalysed reaction is XMP + L-glutamine + ATP + H2O = GMP + L-glutamate + AMP + diphosphate + 2 H(+). It participates in purine metabolism; GMP biosynthesis; GMP from XMP (L-Gln route): step 1/1. Functionally, catalyzes the synthesis of GMP from XMP. The protein is GMP synthase [glutamine-hydrolyzing] of Albidiferax ferrireducens (strain ATCC BAA-621 / DSM 15236 / T118) (Rhodoferax ferrireducens).